Here is a 93-residue protein sequence, read N- to C-terminus: Aspartyl/glutamyl-tRNA(Asn/Gln) amidotransferase subunit C (93 aa).

The protein belongs to the GatC family. Heterotrimer of A, B and C subunits.

It carries out the reaction L-glutamyl-tRNA(Gln) + L-glutamine + ATP + H2O = L-glutaminyl-tRNA(Gln) + L-glutamate + ADP + phosphate + H(+). The enzyme catalyses L-aspartyl-tRNA(Asn) + L-glutamine + ATP + H2O = L-asparaginyl-tRNA(Asn) + L-glutamate + ADP + phosphate + 2 H(+). Its function is as follows. Allows the formation of correctly charged Asn-tRNA(Asn) or Gln-tRNA(Gln) through the transamidation of misacylated Asp-tRNA(Asn) or Glu-tRNA(Gln) in organisms which lack either or both of asparaginyl-tRNA or glutaminyl-tRNA synthetases. The reaction takes place in the presence of glutamine and ATP through an activated phospho-Asp-tRNA(Asn) or phospho-Glu-tRNA(Gln). The polypeptide is Aspartyl/glutamyl-tRNA(Asn/Gln) amidotransferase subunit C (Methanocella arvoryzae (strain DSM 22066 / NBRC 105507 / MRE50)).